Here is a 377-residue protein sequence, read N- to C-terminus: MSTQDSDSIGIVSARRAHFDTPLSLKSGAVLDSYELVYETYGELNADRSNAVLICHALSGNHHVAGVYADNPKNTGWWNNMIGPGKPVDTRKFFVIGINNLGGCHGSTGPISINDKTGKRFGPDFPLVTTADWAKTYVRFADQFSIDCFAAVIGGSLGGMSAMQLALDAPERVRHAIVVAASARLTAQNIAFNDVARQAILTDPDFHDGDYYSHGTHPRRGLRLARMLGHITYLSDDSMASKFGRELRNGSLAFNYDVEFQIESYLHHQGDKFADLFDANTYLLMTKALDYFDPAQDYDGNLSAAFARAQADFLVLSFTSDWRFSPERSRDIVKALLDNKLNVSYAEIPSSYGHDSFLMQDDYYHQLIRAYMNNIAL.

The 309-residue stretch at asparagine 50–leucine 358 folds into the AB hydrolase-1 domain. The active-site Nucleophile is the serine 156. A substrate-binding site is contributed by arginine 226. Catalysis depends on residues aspartate 321 and histidine 354. Aspartate 355 contacts substrate.

It belongs to the AB hydrolase superfamily. MetX family. As to quaternary structure, homodimer.

Its subcellular location is the cytoplasm. The enzyme catalyses L-homoserine + succinyl-CoA = O-succinyl-L-homoserine + CoA. Its pathway is amino-acid biosynthesis; L-methionine biosynthesis via de novo pathway; O-succinyl-L-homoserine from L-homoserine: step 1/1. Functionally, transfers a succinyl group from succinyl-CoA to L-homoserine, forming succinyl-L-homoserine. The chain is Homoserine O-succinyltransferase from Nitrosomonas europaea (strain ATCC 19718 / CIP 103999 / KCTC 2705 / NBRC 14298).